Reading from the N-terminus, the 87-residue chain is MVNMKASMFLTFAGLVLLFVVCYASESEEKEFPKEMLSSIFAVDNDFKQEERDCAGYMRECKGKLCCSGYVCSSRWKWCVLPAPWRR.

A signal peptide spans 1–24; the sequence is MVNMKASMFLTFAGLVLLFVVCYA. A propeptide spanning residues 25–52 is cleaved from the precursor; that stretch reads SESEEKEFPKEMLSSIFAVDNDFKQEER. Disulfide bonds link cysteine 54/cysteine 67, cysteine 61/cysteine 72, and cysteine 66/cysteine 79.

This sequence belongs to the neurotoxin 10 (Hwtx-1) family. 51 (Hntx-8) subfamily. Hntx-8 sub-subfamily. In terms of tissue distribution, expressed by the venom gland.

It is found in the secreted. In terms of biological role, ion channel inhibitor. This chain is U3-theraphotoxin-Hhn1l, found in Cyriopagopus hainanus (Chinese bird spider).